The chain runs to 287 residues: 4-hydroxybenzoate octaprenyltransferase (287 aa).

9 consecutive transmembrane segments (helical) span residues 22–42, 45–65, 91–111, 114–134, 139–159, 161–181, 212–232, 236–256, and 267–287; these read IGTL…AQGF, LGVL…GCVI, TSTE…LLVL, NSLT…YPFM, QLPQ…AFAA, ANAL…WTIA, IIIA…GWLE, WIYF…QLQI, and AFLD…LGYL.

Belongs to the UbiA prenyltransferase family. Mg(2+) serves as cofactor.

The protein localises to the cell inner membrane. It carries out the reaction all-trans-octaprenyl diphosphate + 4-hydroxybenzoate = 4-hydroxy-3-(all-trans-octaprenyl)benzoate + diphosphate. Its pathway is cofactor biosynthesis; ubiquinone biosynthesis. Its function is as follows. Catalyzes the prenylation of para-hydroxybenzoate (PHB) with an all-trans polyprenyl group. Mediates the second step in the final reaction sequence of ubiquinone-8 (UQ-8) biosynthesis, which is the condensation of the polyisoprenoid side chain with PHB, generating the first membrane-bound Q intermediate 3-octaprenyl-4-hydroxybenzoate. This chain is 4-hydroxybenzoate octaprenyltransferase, found in Psychromonas ingrahamii (strain DSM 17664 / CCUG 51855 / 37).